We begin with the raw amino-acid sequence, 413 residues long: MPQQNYLDELTPGFTPLLAIKEASRCLLCHDAPCSQACPAQTDPGKFIRSIYFRNFKGAAETIRENNALGAVCARVCPTEKLCQRGCTRSGIDKPIDIARLQRFITDFEQQTAMQIYQPGSKTRGKVAIIGAGPAGLQASVTLTHLGYDVTIYEKQPQPGGWLRHGIPAFRLPQSVLDQEIARIVEMGVNIKCNCEVGGSLSLAQLKAEYRAVLMTVGMSCGSGLPLFEQASHVEIAVDFLQRARQADGDISVPRSALIIGGGDVAMDVASTLKILGCPSVTCVAREELAEFPASEKEFTSTQALGVSIIDGFTPVAVSGNKVTFHHVRHSGELTLEAENIILAVGQHARLDTFAEIKAQHNIIDTHNYQTDDPAIFAAGDIVKGDKTVVYAVKTGKEAAQAIHHYLEEACSC.

Residue Glu-287 participates in NAD(+) binding.

This sequence belongs to the NADH dehydrogenase family. In terms of assembly, heterotetramer of 2 PreA and 2 PreT subunits.

The enzyme catalyses 5,6-dihydrouracil + NAD(+) = uracil + NADH + H(+). The catalysed reaction is 5,6-dihydrothymine + NAD(+) = thymine + NADH + H(+). Its function is as follows. Involved in pyrimidine base degradation. Catalyzes physiologically the reduction of uracil to 5,6-dihydrouracil (DHU) by using NADH as a specific cosubstrate. It also catalyzes the reverse reaction and the reduction of thymine to 5,6-dihydrothymine (DHT). The polypeptide is NAD-dependent dihydropyrimidine dehydrogenase subunit PreT (preT) (Salmonella typhimurium (strain LT2 / SGSC1412 / ATCC 700720)).